The following is a 263-amino-acid chain: Kallikrein 1-related peptidase b27 (263 aa).

Positions 1–17 (MRFLILFLALSLGGIDA) are cleaved as a signal peptide. Positions 18 to 24 (APPVQSR) are cleaved as a propeptide — activation peptide. In terms of domain architecture, Peptidase S1 spans 25 to 260 (IIGGFKCKKN…FTSWIKDTMA (236 aa)). 5 cysteine pairs are disulfide-bonded: Cys-31/Cys-175, Cys-50/Cys-66, Cys-154/Cys-221, Cys-186/Cys-200, and Cys-211/Cys-236. His-65 (charge relay system) is an active-site residue. Residues Asn-69 and Asn-105 are each glycosylated (N-linked (GlcNAc...) asparagine). The active-site Charge relay system is Asp-122. Residue Ser-215 is the Charge relay system of the active site.

This sequence belongs to the peptidase S1 family. Kallikrein subfamily. Expressed in testis and submaxillary gland. Not expressed in heart, brain, spleen, lung, liver, muscle, kidney and ovary. In the testis, expression localized specifically to Leydig cells in the interstitial tissues.

Strongly inhibited by protease inhibitors diisopropyl fluorophosphate, phenylmethanesulfonyl fluoride and SBTI. Serine protease with chymotrypsin-like cleavage specificity. Shows activity towards casein, gelatin, IGFBP3 and fibronectin but not towards laminin or collagens I and IV. Does not hydrolyze kininogin to release Lys-bradykinin. This is Kallikrein 1-related peptidase b27 (Klk1b27) from Mus musculus (Mouse).